Consider the following 262-residue polypeptide: 3-methyl-2-oxobutanoate hydroxymethyltransferase (262 aa).

Aspartate 44 and aspartate 83 together coordinate Mg(2+). 3-methyl-2-oxobutanoate contacts are provided by residues 44 to 45, aspartate 83, and lysine 113; that span reads DS. Glutamate 115 contacts Mg(2+). Glutamate 182 acts as the Proton acceptor in catalysis.

Belongs to the PanB family. As to quaternary structure, homodecamer; pentamer of dimers. The cofactor is Mg(2+).

Its subcellular location is the cytoplasm. It catalyses the reaction 3-methyl-2-oxobutanoate + (6R)-5,10-methylene-5,6,7,8-tetrahydrofolate + H2O = 2-dehydropantoate + (6S)-5,6,7,8-tetrahydrofolate. It functions in the pathway cofactor biosynthesis; (R)-pantothenate biosynthesis; (R)-pantoate from 3-methyl-2-oxobutanoate: step 1/2. Its function is as follows. Catalyzes the reversible reaction in which hydroxymethyl group from 5,10-methylenetetrahydrofolate is transferred onto alpha-ketoisovalerate to form ketopantoate. This chain is 3-methyl-2-oxobutanoate hydroxymethyltransferase, found in Picosynechococcus sp. (strain ATCC 27264 / PCC 7002 / PR-6) (Agmenellum quadruplicatum).